Consider the following 425-residue polypeptide: Histidine--tRNA ligase 1 (425 aa).

Belongs to the class-II aminoacyl-tRNA synthetase family. As to quaternary structure, homodimer.

Its subcellular location is the cytoplasm. It catalyses the reaction tRNA(His) + L-histidine + ATP = L-histidyl-tRNA(His) + AMP + diphosphate + H(+). This chain is Histidine--tRNA ligase 1, found in Bacillus thuringiensis subsp. konkukian (strain 97-27).